Reading from the N-terminus, the 448-residue chain is Serine--tRNA ligase (448 aa).

255–257 (TSE) serves as a coordination point for L-serine. 286–288 (RSE) contributes to the ATP binding site. E309 is an L-serine binding site. 373-376 (EISS) is an ATP binding site. An L-serine-binding site is contributed by S408.

It belongs to the class-II aminoacyl-tRNA synthetase family. Type-1 seryl-tRNA synthetase subfamily. Homodimer. The tRNA molecule binds across the dimer.

It is found in the cytoplasm. The catalysed reaction is tRNA(Ser) + L-serine + ATP = L-seryl-tRNA(Ser) + AMP + diphosphate + H(+). The enzyme catalyses tRNA(Sec) + L-serine + ATP = L-seryl-tRNA(Sec) + AMP + diphosphate + H(+). Its pathway is aminoacyl-tRNA biosynthesis; selenocysteinyl-tRNA(Sec) biosynthesis; L-seryl-tRNA(Sec) from L-serine and tRNA(Sec): step 1/1. Functionally, catalyzes the attachment of serine to tRNA(Ser). Is also able to aminoacylate tRNA(Sec) with serine, to form the misacylated tRNA L-seryl-tRNA(Sec), which will be further converted into selenocysteinyl-tRNA(Sec). In Bordetella petrii (strain ATCC BAA-461 / DSM 12804 / CCUG 43448), this protein is Serine--tRNA ligase.